The sequence spans 1058 residues: Carbamoyl phosphate synthase large chain (1058 aa).

The interval 1–401 (MAKRTDIKKI…CLLKACRSLE (401 aa)) is carboxyphosphate synthetic domain. R129, R169, G175, G176, R208, I210, E215, G241, I242, H243, Q284, and E298 together coordinate ATP. Residues 133–327 (KQLMKELGEP…IAKIAAKIAV (195 aa)) form the ATP-grasp 1 domain. Residues Q284, E298, and N300 each coordinate Mg(2+). Mn(2+)-binding residues include Q284, E298, and N300. The segment at 402–546 (IGVDHNELKG…YSTYEWENES (145 aa)) is oligomerization domain. Positions 547–929 (IKSEKESVIV…ALYKAFEASY (383 aa)) are carbamoyl phosphate synthetic domain. Positions 671–861 (EKALKDLGIP…MAQVATKLIL (191 aa)) constitute an ATP-grasp 2 domain. ATP is bound by residues R707, S746, I748, E752, G777, V778, H779, S780, Q820, and E832. Residues Q820, E832, and N834 each contribute to the Mg(2+) site. Mn(2+) contacts are provided by Q820, E832, and N834. Residues 930-1058 (LHMPEYGTIV…ESRTFSIEAI (129 aa)) form the MGS-like domain. Residues 930–1058 (LHMPEYGTIV…ESRTFSIEAI (129 aa)) are allosteric domain.

The protein belongs to the CarB family. As to quaternary structure, composed of two chains; the small (or glutamine) chain promotes the hydrolysis of glutamine to ammonia, which is used by the large (or ammonia) chain to synthesize carbamoyl phosphate. Tetramer of heterodimers (alpha,beta)4. The cofactor is Mg(2+). Mn(2+) is required as a cofactor.

The enzyme catalyses hydrogencarbonate + L-glutamine + 2 ATP + H2O = carbamoyl phosphate + L-glutamate + 2 ADP + phosphate + 2 H(+). It catalyses the reaction hydrogencarbonate + NH4(+) + 2 ATP = carbamoyl phosphate + 2 ADP + phosphate + 2 H(+). It functions in the pathway amino-acid biosynthesis; L-arginine biosynthesis; carbamoyl phosphate from bicarbonate: step 1/1. The protein operates within pyrimidine metabolism; UMP biosynthesis via de novo pathway; (S)-dihydroorotate from bicarbonate: step 1/3. Its function is as follows. Large subunit of the glutamine-dependent carbamoyl phosphate synthetase (CPSase). CPSase catalyzes the formation of carbamoyl phosphate from the ammonia moiety of glutamine, carbonate, and phosphate donated by ATP, constituting the first step of 2 biosynthetic pathways, one leading to arginine and/or urea and the other to pyrimidine nucleotides. The large subunit (synthetase) binds the substrates ammonia (free or transferred from glutamine from the small subunit), hydrogencarbonate and ATP and carries out an ATP-coupled ligase reaction, activating hydrogencarbonate by forming carboxy phosphate which reacts with ammonia to form carbamoyl phosphate. This is Carbamoyl phosphate synthase large chain from Streptococcus equi subsp. zooepidemicus (strain H70).